A 343-amino-acid polypeptide reads, in one-letter code: SH2 domain-containing adapter protein D (343 aa).

Residues 1 to 176 form a disordered region; the sequence is MAKWLRDYLN…PADEYDQPWE (176 aa). Basic and acidic residues-rich tracts occupy residues 29 to 40 and 73 to 82; these read DILRAYREQKDL and IKVEAADMAR. The span at 92–102 shows a compositional bias: acidic residues; that stretch reads EEPEAETEYSD. A compositionally biased stretch (basic and acidic residues) spans 160–176; that stretch reads RPLEDERPADEYDQPWE. One can recognise an SH2 domain in the interval 225–320; that stretch reads WFHGPLSRAE…AEHLALLYPV (96 aa). Residues 322-343 form a disordered region; it reads SSQSSQGPCTLAAKPERGQGDP.

Post-translationally, tyrosine phosphorylated by ABL. In terms of tissue distribution, specifically expressed in brain.

May function as an adapter protein. This chain is SH2 domain-containing adapter protein D (Shd), found in Mus musculus (Mouse).